The chain runs to 75 residues: uncharacterized protein (75 aa).

This is an uncharacterized protein from Halalkalibacterium halodurans (strain ATCC BAA-125 / DSM 18197 / FERM 7344 / JCM 9153 / C-125) (Bacillus halodurans).